Reading from the N-terminus, the 130-residue chain is Small ribosomal subunit protein uS9 (130 aa).

This sequence belongs to the universal ribosomal protein uS9 family.

The chain is Small ribosomal subunit protein uS9 from Geobacillus thermodenitrificans (strain NG80-2).